The chain runs to 329 residues: Lipoyl synthase (329 aa).

Residues methionine 1–lysine 23 are disordered. [4Fe-4S] cluster-binding residues include cysteine 76, cysteine 81, cysteine 87, cysteine 102, cysteine 106, cysteine 109, and serine 316. The region spanning cysteine 87 to threonine 305 is the Radical SAM core domain.

It belongs to the radical SAM superfamily. Lipoyl synthase family. [4Fe-4S] cluster serves as cofactor.

It localises to the cytoplasm. It carries out the reaction [[Fe-S] cluster scaffold protein carrying a second [4Fe-4S](2+) cluster] + N(6)-octanoyl-L-lysyl-[protein] + 2 oxidized [2Fe-2S]-[ferredoxin] + 2 S-adenosyl-L-methionine + 4 H(+) = [[Fe-S] cluster scaffold protein] + N(6)-[(R)-dihydrolipoyl]-L-lysyl-[protein] + 4 Fe(3+) + 2 hydrogen sulfide + 2 5'-deoxyadenosine + 2 L-methionine + 2 reduced [2Fe-2S]-[ferredoxin]. It participates in protein modification; protein lipoylation via endogenous pathway; protein N(6)-(lipoyl)lysine from octanoyl-[acyl-carrier-protein]: step 2/2. Catalyzes the radical-mediated insertion of two sulfur atoms into the C-6 and C-8 positions of the octanoyl moiety bound to the lipoyl domains of lipoate-dependent enzymes, thereby converting the octanoylated domains into lipoylated derivatives. This Burkholderia pseudomallei (strain 1106a) protein is Lipoyl synthase.